Consider the following 276-residue polypeptide: MAIKTYKPYTPSRRFMSVLDSKDITAKSSVKGLLTKLKATAGRNNNGRITSRHKERGAKKLYRIIDFKRNKYNIEGKVAAIEYDPYRNARIALVVYPDGDKRYILQPSGLKVGDSVIAAEGGLDIKVGFAMKLKNIPIGTVVHNIEMHPGAGGQLARSAGMSAQIMGRENKYTIIRMPSSEMRYILSECMASVGVVGNEDFINVSIGKAGRNRHRGIRPQTRGSAMNPVDHPHGGGEGKTGTSGHPVSPWGTPAKGYKTRKKKASDKLIISRKKHK.

The segment at 212–276 (NRHRGIRPQT…KLIISRKKHK (65 aa)) is disordered. Residues 257-276 (YKTRKKKASDKLIISRKKHK) show a composition bias toward basic residues.

It belongs to the universal ribosomal protein uL2 family. In terms of assembly, part of the 50S ribosomal subunit. Forms a bridge to the 30S subunit in the 70S ribosome.

Functionally, one of the primary rRNA binding proteins. Required for association of the 30S and 50S subunits to form the 70S ribosome, for tRNA binding and peptide bond formation. It has been suggested to have peptidyltransferase activity; this is somewhat controversial. Makes several contacts with the 16S rRNA in the 70S ribosome. The chain is Large ribosomal subunit protein uL2 from Helicobacter pylori (strain HPAG1).